Consider the following 758-residue polypeptide: Long-chain-alcohol oxidase FAO1 (758 aa).

The next 2 membrane-spanning stretches (helical) occupy residues 102 to 122 (IVLRILTFRLGTLLLCGLVCL) and 155 to 175 (PLARIGFMMIKAIFLFYYFTW). FAD is bound at residue 246-261 (CDAVVVGSGCGGGVAA). The active-site Proton acceptor is the His689.

It belongs to the GMC oxidoreductase family.

It is found in the membrane. It catalyses the reaction a long-chain primary fatty alcohol + O2 = a long-chain fatty aldehyde + H2O2. In terms of biological role, long-chain fatty alcohol oxidase involved in the omega-oxidation pathway of lipid degradation. This chain is Long-chain-alcohol oxidase FAO1 (FAO1), found in Arabidopsis thaliana (Mouse-ear cress).